A 276-amino-acid chain; its full sequence is NH(3)-dependent NAD(+) synthetase (276 aa).

Position 43 to 50 (G43 to S50) interacts with ATP. A Mg(2+)-binding site is contributed by D49. R146 provides a ligand contact to deamido-NAD(+). T166 is an ATP binding site. E171 is a binding site for Mg(2+). K179 and D186 together coordinate deamido-NAD(+). 2 residues coordinate ATP: K195 and T217. Position 266-267 (H266–K267) interacts with deamido-NAD(+).

The protein belongs to the NAD synthetase family. In terms of assembly, homodimer.

The enzyme catalyses deamido-NAD(+) + NH4(+) + ATP = AMP + diphosphate + NAD(+) + H(+). It participates in cofactor biosynthesis; NAD(+) biosynthesis; NAD(+) from deamido-NAD(+) (ammonia route): step 1/1. In terms of biological role, catalyzes the ATP-dependent amidation of deamido-NAD to form NAD. Uses ammonia as a nitrogen source. This is NH(3)-dependent NAD(+) synthetase from Shewanella sediminis (strain HAW-EB3).